A 727-amino-acid polypeptide reads, in one-letter code: ABC transporter G family member 6 (727 aa).

The ABC transporter domain maps to leucine 68–glutamate 333. An ATP-binding site is contributed by glycine 126–serine 133. The ABC transmembrane type-2 domain occupies valine 421–phenylalanine 631. 6 helical membrane passes run leucine 440 to tryptophan 460, cysteine 475 to leucine 495, leucine 517 to isoleucine 537, alanine 560 to methionine 580, leucine 581 to isoleucine 601, and leucine 700 to leucine 720.

This sequence belongs to the ABC transporter superfamily. ABCG family. Eye pigment precursor importer (TC 3.A.1.204) subfamily.

It localises to the membrane. The chain is ABC transporter G family member 6 (ABCG6) from Arabidopsis thaliana (Mouse-ear cress).